Reading from the N-terminus, the 293-residue chain is C-type lectin domain family 4 member G (293 aa).

At 1–31 the chain is on the cytoplasmic side; sequence MDTTRYSKWGGSSEEVPGGPWGRWVHWSRRP. Position 12 is a phosphoserine (Ser12). Residues 32-52 form a helical; Signal-anchor for type II membrane protein membrane-spanning segment; sequence LFLALAVLVTTVLWAVILSIL. The Extracellular segment spans residues 53-293; that stretch reads LSKASTERAA…GWICEKRHNC (241 aa). Asn73 carries N-linked (GlcNAc...) asparagine glycosylation. A coiled-coil region spans residues 96 to 136; that stretch reads SGTQAQLQTTRAELGEAQAKLMEQESALRELRERVTQGLAE. Residue Asn159 is glycosylated (N-linked (GlcNAc...) asparagine). The C-type lectin domain occupies 172–287; that stretch reads FEGSCYFFSV…CDSEKDGWIC (116 aa). Cysteines 264 and 278 form a disulfide.

In terms of assembly, (Microbial infection) Interacts with Japanese encephalitis virus envelope protein E. As to quaternary structure, (Microbial infection) Interacts with ebolavirus glycoprotein. (Microbial infection) Interacts with SARS-CoV spike glycoprotein. In terms of assembly, (Microbial infection) Interacts with lassa virus and Lymphocytic choriomeningitis virus glycoprotein. As to expression, expressed exclusively in fetal and adult liver and in lymph nodes. Specifically expressed by endothelial cells lining lymph node and liver sinuses (at protein level).

The protein resides in the cell membrane. Binds mannose, N-acetylglucosamine (GlcNAc) and fucose, but not galactose, in a Ca(2+)-dependent manner, in vitro. In terms of biological role, (Microbial infection) Acts as a receptor for Japanese encephalitis virus. Functionally, (Microbial infection) Acts as a receptor for Ebolavirus. Its function is as follows. (Microbial infection) Acts as a receptor for SARS-CoV. (Microbial infection) Acts as a receptor for Lassa virus and Lymphocytic choriomeningitis virus glycoprotein. The polypeptide is C-type lectin domain family 4 member G (CLEC4G) (Homo sapiens (Human)).